A 326-amino-acid polypeptide reads, in one-letter code: Light-induced protein, chloroplastic (326 aa).

Residues 1-63 constitute a chloroplast transit peptide; the sequence is MASISSLNQI…TNPKPKFTAQ (63 aa).

It belongs to the LIPC family. In terms of assembly, associates with the major light-harvesting antenna complex polypeptides of the PSII oxygen-evolving complex. In terms of tissue distribution, expressed in leaves.

The protein resides in the plastid. It is found in the chloroplast thylakoid membrane. In terms of biological role, required for normal plant growth. May be both photoprotective and play an ancillary role in photosynthesis. May structurally stabilize thylakoids during osmotic and oxidative stress. This Solanum tuberosum (Potato) protein is Light-induced protein, chloroplastic.